Here is a 59-residue protein sequence, read N- to C-terminus: Large ribosomal subunit protein bL32 (59 aa).

A disordered region spans residues 1–59; it reads MAVQQNRKTPSKRGMRRSHDSLSKPTLSTEQNTGETHRRHHISADGYYRGRKVTRGQDD. Residues 23–34 are compositionally biased toward polar residues; that stretch reads SKPTLSTEQNTG. Basic residues predominate over residues 49 to 59; the sequence is RGRKVTRGQDD.

The protein belongs to the bacterial ribosomal protein bL32 family.

The polypeptide is Large ribosomal subunit protein bL32 (Halorhodospira halophila (strain DSM 244 / SL1) (Ectothiorhodospira halophila (strain DSM 244 / SL1))).